Here is a 1182-residue protein sequence, read N- to C-terminus: Rho GTPase-activating protein 20 (1182 aa).

The disordered stretch occupies residues 1 to 40 (MEAMSPQQDALGAQPGRSSSLTGMSRIAGGPGTKKKMKTL). Phosphoserine is present on serine 46. The 101-residue stretch at 85-185 (TLLIDGPVEL…WLSLLQRYIA (101 aa)) folds into the PH domain. The Ras-associating domain occupies 194-283 (KSIPLKIFAK…TALLTQGSRD (90 aa)). One can recognise a Rho-GAP domain in the interval 365–551 (VSLPDLCEND…FLIENCCRVF (187 aa)). Residues serine 704 and serine 730 each carry the phosphoserine modification. Disordered stretches follow at residues 745–772 (QTQPQKKGDKVCLKQSSVTGTDVSKRNT), 803–839 (VASYSHGSSQDHPRKQAFDADPCRFSPPHLTDAQKSS), 935–955 (SYSSLSSPGSSPSGSSVSSQD), 982–1011 (TQRKQEELSSDFDSPSRLSGMPGPSMGQAS), 1074–1101 (LPSCASGTPEADSLQESQDDLQGDEGPG), and 1142–1182 (SGGQ…GTDI). Over residues 758 to 772 (KQSSVTGTDVSKRNT) the composition is skewed to polar residues. Positions 811–824 (SQDHPRKQAFDADP) are enriched in basic and acidic residues.

Functionally, GTPase activator for the Rho-type GTPases by converting them to an inactive GDP-bound state. This is Rho GTPase-activating protein 20 (Arhgap20) from Mus musculus (Mouse).